Reading from the N-terminus, the 207-residue chain is Superoxide dismutase [Mn] (207 aa).

Positions 28, 76, 160, and 164 each coordinate Mn(2+).

The protein belongs to the iron/manganese superoxide dismutase family. Requires Mn(2+) as cofactor.

It carries out the reaction 2 superoxide + 2 H(+) = H2O2 + O2. In terms of biological role, destroys superoxide anion radicals which are normally produced within the cells and which are toxic to biological systems. This is Superoxide dismutase [Mn] (sodA) from Mycolicibacterium fortuitum (Mycobacterium fortuitum).